The primary structure comprises 283 residues: Bifunctional protein FolD (283 aa).

NADP(+)-binding positions include 163–165 (GRS), serine 188, and isoleucine 229.

The protein belongs to the tetrahydrofolate dehydrogenase/cyclohydrolase family. In terms of assembly, homodimer.

It catalyses the reaction (6R)-5,10-methylene-5,6,7,8-tetrahydrofolate + NADP(+) = (6R)-5,10-methenyltetrahydrofolate + NADPH. It carries out the reaction (6R)-5,10-methenyltetrahydrofolate + H2O = (6R)-10-formyltetrahydrofolate + H(+). It functions in the pathway one-carbon metabolism; tetrahydrofolate interconversion. In terms of biological role, catalyzes the oxidation of 5,10-methylenetetrahydrofolate to 5,10-methenyltetrahydrofolate and then the hydrolysis of 5,10-methenyltetrahydrofolate to 10-formyltetrahydrofolate. This chain is Bifunctional protein FolD, found in Campylobacter concisus (strain 13826).